The sequence spans 252 residues: Sugar fermentation stimulation protein homolog (252 aa).

This sequence belongs to the SfsA family.

This is Sugar fermentation stimulation protein homolog from Picosynechococcus sp. (strain ATCC 27264 / PCC 7002 / PR-6) (Agmenellum quadruplicatum).